The following is a 298-amino-acid chain: MFNNDKVKIGICPIGWTNDDMPDLGKENTFEQAVSEMALAGFKGTEIGNKYPKDVKVLKRALEMRNLQIASAWFSSFLTTKPYEETEKEFIAHRDFLHAMGSKVIVVSEQGHSIQGQMETPIFDGKHHFNEEEWNLLAHGLNKLGQLAADKEMRIVYHHHMGTGVQTTEEIDKLMSVTDENLVYLLFDTGHLVYSGENPVEILKKYVQRIKHVHLKDIRPEIVSKVKNEKLSFLKGVRAGAFTVPGDGSIDFEPIFKILAENNYEGWLMIEAEQDPSIANPLEYAIKGRQYIKEKASI.

The protein belongs to the IolE/MocC family. It depends on glutathione as a cofactor. Co(2+) is required as a cofactor. The cofactor is Mn(2+).

It catalyses the reaction scyllo-inosose = 3D-3,5/4-trihydroxycyclohexane-1,2-dione + H2O. Its pathway is polyol metabolism; myo-inositol degradation into acetyl-CoA; acetyl-CoA from myo-inositol: step 2/7. Catalyzes the dehydration of inosose (2-keto-myo-inositol, 2KMI or 2,4,6/3,5-pentahydroxycyclohexanone) to 3D-(3,5/4)-trihydroxycyclohexane-1,2-dione (D-2,3-diketo-4-deoxy-epi-inositol). The sequence is that of Inosose dehydratase from Clostridium botulinum (strain Eklund 17B / Type B).